The chain runs to 423 residues: MDIDQYMTDLGRRARQASRAMARASTAAKNAALAAVAQGIERDAALLKEANARDVARAREKGHDAAFIDRLTLSDKALKTMVEGLRQVAALADPIGEISNLKYRPSGIQVGQMRVPLGVIGIIYESRPNVTIDAAALCLKSGNATILRGGSEALECNAALAKLIGEGLEKAGLPQEAVQVVATSDRAAVGKLITMTEYVDVIVPRGGKSLIERLMNEARVPMIKHLDGICHVYVDDRADLAKALTVCDNAKTHRYGTCNTMETLLVARGIAAEVLPPLGKLYRDKQVELRVDAAARAVLADAGVGPLVDATEEDWRTEYLAPVLAIKVVENLDAAIDHINTYSSQHTDAIVTEDHDRAMRFLREVDSASVMVNASTRFADGFEFGLGAEIGISNDKLHARGPVGLEGLTSLKYVVLGHGEGRQ.

Belongs to the gamma-glutamyl phosphate reductase family.

Its subcellular location is the cytoplasm. It carries out the reaction L-glutamate 5-semialdehyde + phosphate + NADP(+) = L-glutamyl 5-phosphate + NADPH + H(+). Its pathway is amino-acid biosynthesis; L-proline biosynthesis; L-glutamate 5-semialdehyde from L-glutamate: step 2/2. Functionally, catalyzes the NADPH-dependent reduction of L-glutamate 5-phosphate into L-glutamate 5-semialdehyde and phosphate. The product spontaneously undergoes cyclization to form 1-pyrroline-5-carboxylate. This Paraburkholderia phytofirmans (strain DSM 17436 / LMG 22146 / PsJN) (Burkholderia phytofirmans) protein is Gamma-glutamyl phosphate reductase.